The sequence spans 240 residues: Proteasome subunit alpha (240 aa).

Belongs to the peptidase T1A family. As to quaternary structure, the 20S proteasome core is composed of 14 alpha and 14 beta subunits that assemble into four stacked heptameric rings, resulting in a barrel-shaped structure. The two inner rings, each composed of seven catalytic beta subunits, are sandwiched by two outer rings, each composed of seven alpha subunits. The catalytic chamber with the active sites is on the inside of the barrel. Has a gated structure, the ends of the cylinder being occluded by the N-termini of the alpha-subunits. Is capped at one or both ends by the proteasome regulatory ATPase, PAN.

The protein localises to the cytoplasm. With respect to regulation, the formation of the proteasomal ATPase PAN-20S proteasome complex, via the docking of the C-termini of PAN into the intersubunit pockets in the alpha-rings, triggers opening of the gate for substrate entry. Interconversion between the open-gate and close-gate conformations leads to a dynamic regulation of the 20S proteasome proteolysis activity. Its function is as follows. Component of the proteasome core, a large protease complex with broad specificity involved in protein degradation. The chain is Proteasome subunit alpha from Methanoregula boonei (strain DSM 21154 / JCM 14090 / 6A8).